The sequence spans 988 residues: Junction-mediating and -regulatory protein (988 aa).

The interaction with p300/EP300 stretch occupies residues 1–126 (MSFALEETLE…RSTRSLLGDP (126 aa)). Residues 51 to 178 (AQRQRSGSRE…RPAPREAQVS (128 aa)) are disordered. Ser115 and Ser121 each carry phosphoserine. A compositionally biased stretch (low complexity) spans 160–175 (AAGAAAAAARPAPREA). Coiled-coil stretches lie at residues 324–360 (SELR…ELLD), 489–541 (LQMM…YEVQ), and 590–621 (ASAY…AKKS). The segment at 478–567 (EKLQYAVSKE…SIKRLISEKR (90 aa)) is interaction with p300/EP300. Residue Ser713 is modified to Phosphoserine. Basic and acidic residues predominate over residues 731–742 (EEKTEEVGEGRV). Disordered regions lie at residues 731–755 (EEKT…PQSL) and 800–865 (INPL…LFDS). Residues 746–755 (PSQTTEPQSL) are compositionally biased toward polar residues. The span at 803 to 827 (LPSPLPPTPPPPPPPPPPPPPPPLP) shows a compositional bias: pro residues. Residues 832 to 851 (SGPETLEKDLPRKEGNEKRI) show a composition bias toward basic and acidic residues. At Ser888 the chain carries Phosphoserine. A WH2 domain is found at 921-938 (DSNNILAQIRKGVKLKKV). The disordered stretch occupies residues 967–988 (IKEASPESEDEEEALPCTDWEN). A compositionally biased stretch (acidic residues) spans 972–988 (PESEDEEEALPCTDWEN). Residue Ser974 is modified to Phosphoserine.

The protein belongs to the JMY family. Interacts with p300/EP300, the complex activates p53/TP53 transcriptional activity. Interacts with TTC5; the interaction facilitates the association between JMY and p300/EP300. Interacts with MAP1LC3B; the interaction results in the activation of JYM's nucleation activity in the cytoplasm. Interacts with TTC5/STRAP; the interaction results in the inhibition of JYM's nucleation activity in the cytoplasm due to competition with MAP1LC3B binding. Post-translationally, ubiquitinated by MDM2, leading to its subsequent degradation by the proteasome. In case of DNA damage, the interaction with MDM2 is altered, preventing degradation and allowing interaction with p300/EP300 and its function in p53/TP53 stress response.

It is found in the nucleus. The protein localises to the cytoplasmic vesicle. The protein resides in the cytoplasm. It localises to the cytoskeleton. Its subcellular location is the endomembrane system. It is found in the autophagosome membrane. In terms of biological role, acts both as a nuclear p53/TP53-cofactor and a cytoplasmic regulator of actin dynamics depending on conditions. In nucleus, acts as a cofactor that increases p53/TP53 response via its interaction with p300/EP300. Increases p53/TP53-dependent transcription and apoptosis, suggesting an important role in p53/TP53 stress response such as DNA damage. In cytoplasm, acts as a nucleation-promoting factor for both branched and unbranched actin filaments. Activates the Arp2/3 complex to induce branched actin filament networks. Also catalyzes actin polymerization in the absence of Arp2/3, creating unbranched filaments. Contributes to cell motility by controlling actin dynamics. May promote the rapid formation of a branched actin network by first nucleating new mother filaments and then activating Arp2/3 to branch off these filaments. Upon nutrient stress, directly recruited by MAP1LC3B to the phagophore membrane surfaces to promote actin assembly during autophagy. The p53/TP53-cofactor and actin activator activities are regulated via its subcellular location. The chain is Junction-mediating and -regulatory protein (JMY) from Homo sapiens (Human).